A 106-amino-acid polypeptide reads, in one-letter code: Large ribosomal subunit protein uL24 (106 aa).

It belongs to the universal ribosomal protein uL24 family. Part of the 50S ribosomal subunit.

In terms of biological role, one of two assembly initiator proteins, it binds directly to the 5'-end of the 23S rRNA, where it nucleates assembly of the 50S subunit. Its function is as follows. One of the proteins that surrounds the polypeptide exit tunnel on the outside of the subunit. The polypeptide is Large ribosomal subunit protein uL24 (Azobacteroides pseudotrichonymphae genomovar. CFP2).